A 219-amino-acid chain; its full sequence is Probable GTP-binding protein EngB (219 aa).

The EngB-type G domain maps to 24–207; it reads VQPEVAFAGR…HALIESWVRP (184 aa). GTP contacts are provided by residues 32–39, 59–63, 81–84, 148–151, and 185–188; these read GRSNAGKS, GRTQH, DLPG, TKCD, and LFSA. Positions 39 and 61 each coordinate Mg(2+).

It belongs to the TRAFAC class TrmE-Era-EngA-EngB-Septin-like GTPase superfamily. EngB GTPase family. Mg(2+) is required as a cofactor.

Its function is as follows. Necessary for normal cell division and for the maintenance of normal septation. This chain is Probable GTP-binding protein EngB, found in Burkholderia mallei (strain ATCC 23344).